Reading from the N-terminus, the 72-residue chain is DNA gyrase inhibitor YacG (72 aa).

Zn(2+)-binding residues include cysteine 14, cysteine 17, cysteine 33, and cysteine 37.

It belongs to the DNA gyrase inhibitor YacG family. Interacts with GyrB. Zn(2+) is required as a cofactor.

Its function is as follows. Inhibits all the catalytic activities of DNA gyrase by preventing its interaction with DNA. Acts by binding directly to the C-terminal domain of GyrB, which probably disrupts DNA binding by the gyrase. In Mannheimia succiniciproducens (strain KCTC 0769BP / MBEL55E), this protein is DNA gyrase inhibitor YacG.